The primary structure comprises 381 residues: Putative MgpC-like protein MPN_503 (381 aa).

A disordered region spans residues 1 to 109; sequence MNGVAQDKVH…TDSQQSGHNS (109 aa). Residues 13-31 are compositionally biased toward polar residues; it reads EQTTQWNQQASQKNLTNNP. 2 stretches are compositionally biased toward basic and acidic residues: residues 40-51 and 61-73; these read KLDKGRAYRKLN and DSTK…DKDG. Residues 89–109 are compositionally biased toward polar residues; the sequence is VSSTESQMAAVTDSQQSGHNS.

The protein belongs to the MgpC family.

This chain is Putative MgpC-like protein MPN_503, found in Mycoplasma pneumoniae (strain ATCC 29342 / M129 / Subtype 1) (Mycoplasmoides pneumoniae).